The chain runs to 166 residues: Phosphopantetheine adenylyltransferase (166 aa).

Residue S9 coordinates substrate. Residues 9–10 (SF) and H17 each bind ATP. Residues K41, L74, and K88 each coordinate substrate. Residues 89-91 (GLR), E99, and 123-129 (YVHLSST) contribute to the ATP site.

This sequence belongs to the bacterial CoaD family. Homohexamer. Mg(2+) serves as cofactor.

The protein localises to the cytoplasm. It catalyses the reaction (R)-4'-phosphopantetheine + ATP + H(+) = 3'-dephospho-CoA + diphosphate. It functions in the pathway cofactor biosynthesis; coenzyme A biosynthesis; CoA from (R)-pantothenate: step 4/5. Its function is as follows. Reversibly transfers an adenylyl group from ATP to 4'-phosphopantetheine, yielding dephospho-CoA (dPCoA) and pyrophosphate. This Paenarthrobacter aurescens (strain TC1) protein is Phosphopantetheine adenylyltransferase.